A 776-amino-acid chain; its full sequence is Protein translocase subunit SecA 2 (776 aa).

ATP is bound by residues Q80, 98-102, and D486; that span reads GEGKT.

It belongs to the SecA family. As to quaternary structure, monomer and homodimer. Part of the essential Sec protein translocation apparatus which comprises SecA, SecYEG and auxiliary proteins SecDF. Other proteins may also be involved.

The protein resides in the cell membrane. It localises to the cytoplasm. The catalysed reaction is ATP + H2O + cellular proteinSide 1 = ADP + phosphate + cellular proteinSide 2.. Functionally, part of the Sec protein translocase complex. Interacts with the SecYEG preprotein conducting channel. Has a central role in coupling the hydrolysis of ATP to the transfer of proteins into and across the cell membrane, serving as an ATP-driven molecular motor driving the stepwise translocation of polypeptide chains across the membrane. The sequence is that of Protein translocase subunit SecA 2 from Listeria monocytogenes serovar 1/2a (strain ATCC BAA-679 / EGD-e).